The following is a 335-amino-acid chain: Leucine-rich repeat-containing protein 39 (335 aa).

The stretch at 10 to 47 (AVNAVKEVWEKRIKKLNEDLKREKEFQHKLVRIWEERV) forms a coiled coil. LRR repeat units lie at residues 84–105 (QLQEWQLHRTGLLKIPEFIGRF), 107–128 (NLIVLDLSRNTISEIPPGIGLL), 130–151 (RLQELILSYNKIKTVPKELSNC), 153–176 (SLEKLELAVNRDICDLPQELSNLL), 177–197 (KLTHLDLSMNDFTTIPLAVLN), 200–221 (ALEWLDMGSNKLEQLPDTIERM), 223–244 (NLHTLWLQRNEITCLPQTISNM), 246–267 (NLGTLVLSNNKLQDIPVCMEEM), and 269–290 (NLRFVNFRDNPLKLKVSLPPSE).

As to quaternary structure, interacts with MYH7 (via C-terminus). In terms of tissue distribution, highly expressed in skeletal muscle and heart. Not detected in other tissues tested.

It is found in the cytoplasm. The protein resides in the myofibril. It localises to the sarcomere. Its subcellular location is the m line. Functionally, component of the sarcomeric M-band which plays a role in myocyte response to biomechanical stress. May regulate expression of other M-band proteins via an SRF-dependent pathway. Important for normal contractile function in heart. The chain is Leucine-rich repeat-containing protein 39 (LRRC39) from Homo sapiens (Human).